The primary structure comprises 261 residues: tRNA pseudouridine synthase A (261 aa).

Residue Asp-51 is the Nucleophile of the active site. Position 109 (Tyr-109) interacts with substrate.

Belongs to the tRNA pseudouridine synthase TruA family. As to quaternary structure, homodimer.

It carries out the reaction uridine(38/39/40) in tRNA = pseudouridine(38/39/40) in tRNA. Functionally, formation of pseudouridine at positions 38, 39 and 40 in the anticodon stem and loop of transfer RNAs. The sequence is that of tRNA pseudouridine synthase A from Shewanella amazonensis (strain ATCC BAA-1098 / SB2B).